Reading from the N-terminus, the 270-residue chain is Elongation factor Ts (270 aa).

The segment at 75 to 78 is involved in Mg(2+) ion dislocation from EF-Tu; sequence TDFV.

Belongs to the EF-Ts family.

It is found in the cytoplasm. Associates with the EF-Tu.GDP complex and induces the exchange of GDP to GTP. It remains bound to the aminoacyl-tRNA.EF-Tu.GTP complex up to the GTP hydrolysis stage on the ribosome. In Cutibacterium acnes (strain DSM 16379 / KPA171202) (Propionibacterium acnes), this protein is Elongation factor Ts.